A 259-amino-acid polypeptide reads, in one-letter code: AM-toxin biosynthesis protein 11 (259 aa).

The segment at arginine 39–threonine 66 is disordered. The span at isoleucine 50–cysteine 64 shows a compositional bias: polar residues.

The protein operates within mycotoxin biosynthesis. Its function is as follows. Part of the gene clusters that mediate the biosynthesis of AM-toxins, host-selective toxins (HSTs) causing Alternaria blotch on apple, a worldwide distributed disease. AM-toxins are cyclic depsipeptides containing the 3 residues 2-hydroxy-isovaleric acid (2-HIV), dehydroalanine, L-alanine which are common for all 3 AM-toxins I to III. The fourth precursor is L-alpha-amino-methoxyphenyl-valeric acid (L-Amv) for AM-toxin I, L-alpha-amino-phenyl-valeric acid (L-Apv) for AM-toxin II, and L-alpha-amino-hydroxyphenyl-valeric acid (L-Ahv) for AM-toxin III. AM-toxins have two target sites for affecting susceptible apple cells; they cause invagination of the plasma membrane and electrolyte loss and chloroplast disorganization. The non-ribosomal peptide synthetase AMT1 contains 4 catalytic modules and is responsible for activation of each residue in AM-toxin. The aldo-keto reductase AMT2 catalyzes the conversion of 2-keto-isovaleric acid (2-KIV) to 2-hydroxy-isovaleric acid (2-HIV), one of the precursor residues incorporated by AMT1 during AM-toxin biosynthesis, by reduction of its ketone to an alcohol. The cytochrome P450 monooxygenase AMT3 and the thioesterase AMT4 are also important for AM-toxin production, but their exact function within the AM-toxin biosynthesis are not known yet. Up to 21 proteins (including AMT1 to AMT4) are predicted to be involved in AM-toxin biosynthesis since their expression ishighly up-regulated in AM-toxin-producing cultures. This chain is AM-toxin biosynthesis protein 11, found in Alternaria alternata (Alternaria rot fungus).